A 458-amino-acid polypeptide reads, in one-letter code: Carboxypeptidase N catalytic chain (458 aa).

Positions 1–20 are cleaved as a signal peptide; sequence MSDLLSVFLHLLLLFKLVAP. Residues 24–338 enclose the Peptidase M14 domain; it reads RHHRYDDLVR…EALIQFLEQV (315 aa). C42 and C104 are joined by a disulfide. 3 residues coordinate Zn(2+): H86, E89, and H216. C271 and C311 are oxidised to a cystine. E308 serves as the catalytic Proton donor/acceptor. 3 O-linked (GalNAc...) threonine glycosylation sites follow: T400, T402, and T409. The disordered stretch occupies residues 423–458; that stretch reads SPVRRAPSRRHGVRAKVQPQARKKEMEMRQLQRGPA.

It belongs to the peptidase M14 family. In terms of assembly, tetramer of two catalytic chains and two glycosylated inactive chains. The cofactor is Zn(2+). Synthesized in the liver and secreted in plasma.

The protein localises to the secreted. It is found in the extracellular space. It carries out the reaction Release of a C-terminal basic amino acid, preferentially lysine.. Its function is as follows. Protects the body from potent vasoactive and inflammatory peptides containing C-terminal Arg or Lys (such as kinins or anaphylatoxins) which are released into the circulation. The chain is Carboxypeptidase N catalytic chain (CPN1) from Homo sapiens (Human).